The primary structure comprises 100 residues: Large ribosomal subunit protein uL23 (100 aa).

This sequence belongs to the universal ribosomal protein uL23 family. Part of the 50S ribosomal subunit. Contacts protein L29, and trigger factor when it is bound to the ribosome.

In terms of biological role, one of the early assembly proteins it binds 23S rRNA. One of the proteins that surrounds the polypeptide exit tunnel on the outside of the ribosome. Forms the main docking site for trigger factor binding to the ribosome. This Shewanella amazonensis (strain ATCC BAA-1098 / SB2B) protein is Large ribosomal subunit protein uL23.